Consider the following 1002-residue polypeptide: Leucine-rich repeat receptor-like serine/threonine-protein kinase BAM2 (1002 aa).

The first 22 residues, 1–22 (MKLLLLLLLLLLLHISHSFTVA), serve as a signal peptide directing secretion. At 23-636 (KPITELHALL…SHVKPLSATT (614 aa)) the chain is on the extracellular side. N-linked (GlcNAc...) asparagine glycans are attached at residues Asn-51, Asn-80, Asn-97, Asn-123, Asn-130, Asn-153, and Asn-164. LRR repeat units lie at residues 68–92 (LRHVTSLDLSGLNLSGTLSSDVAHL), 93–116 (PLLQNLSLAANQISGPIPPQISNL), 118–140 (ELRHLNLSNNVFNGSFPDELSSG), 141–165 (LVNLRVLDLYNNNLTGDLPVSLTNL), 167–188 (QLRHLHLGGNYFSGKIPATYGT), 189–213 (WPVLEYLAVSGNELTGKIPPEIGNL), 215–238 (TLRELYIGYYNAFENGLPPEIGNL), 239–262 (SELVRFDAANCGLTGEIPPEIGKL), 263–285 (QKLDTLFLQVNAFTGTITQELGL), 286–309 (ISSLKSMDLSNNMFTGEIPTSFSQ), 311–334 (KNLTLLNLFRNKLYGAIPEFIGEM), 335–358 (PELEVLQLWENNFTGSIPQKLGEN), 359–382 (GRLVILDLSSNKLTGTLPPNMCSG), 384–406 (RLMTLITLGNFLFGSIPDSLGKC), 407–430 (ESLTRIRMGENFLNGSIPKELFGL), 431–456 (PKLSQVELQDNYLTGELPISGGGVSG), 458–479 (LGQISLSNNQLSGSLPAAIGNL), 480–503 (SGVQKLLLDGNKFSGSIPPEIGRL), 505–527 (QLSKLDFSHNLFSGRIAPEISRC), 528–551 (KLLTFVDLSRNELSGDIPNELTGM), 552–575 (KILNYLNLSRNHLVGSIPVTIASM), and 577–600 (SLTSVDFSYNNLSGLVPSTGQFSY). 2 N-linked (GlcNAc...) asparagine glycosylation sites follow: Asn-212 and Asn-237. N-linked (GlcNAc...) asparagine glycosylation is found at Asn-312 and Asn-346. Residue Asn-420 is glycosylated (N-linked (GlcNAc...) asparagine). N-linked (GlcNAc...) asparagine glycosylation occurs at Asn-478. N-linked (GlcNAc...) asparagine glycosylation is found at Asn-558, Asn-587, and Asn-602. Residues 637-657 (KLLLVLGLLFCSMVFAIVAII) form a helical membrane-spanning segment. The Cytoplasmic segment spans residues 658-1002 (KARSLRNASE…SGSPPDLLSN (345 aa)). A Phosphothreonine modification is found at Thr-682. The Protein kinase domain occupies 690–967 (LKEDNIIGKG…VQILTEIPKI (278 aa)). ATP contacts are provided by residues 696–704 (IGKGGAGIV) and Lys-718. Phosphotyrosine is present on residues Tyr-765 and Tyr-803. Residue Asp-816 is the Proton acceptor of the active site. Ser-851 carries the phosphoserine modification. Phosphotyrosine occurs at positions 859 and 866. The residue at position 867 (Thr-867) is a Phosphothreonine. The segment at 969–1002 (LSKQQAAESDVTEKAPAINESSPDSGSPPDLLSN) is disordered. Residues 989–1002 (SSPDSGSPPDLLSN) are compositionally biased toward low complexity.

This sequence belongs to the protein kinase superfamily. Ser/Thr protein kinase family. Interacts with BAM1 and CLV1. Binds to the CLV3, CLE11, CLE18, CLE19, CLE22, CLE25, CLE26, CLE40, CLE41 and CLE42 mature peptides, probably via its extracellular leucine-rich repeat region. In terms of tissue distribution, expressed in seedlings, roots, rosette leaves, stems, inflorescences, flowers and siliques.

Its subcellular location is the cell membrane. The catalysed reaction is L-seryl-[protein] + ATP = O-phospho-L-seryl-[protein] + ADP + H(+). It carries out the reaction L-threonyl-[protein] + ATP = O-phospho-L-threonyl-[protein] + ADP + H(+). In terms of biological role, necessary for male gametophyte development, as well as ovule specification and function. Involved in cell-cell communication process required during early anther development, and regulating cell division and differentiation to organize cell layers. Required for the development of high-ordered vascular strands within the leaf and a correlated control of leaf shape, size and symmetry. May regulate the CLV1-dependent CLV3-mediated signaling in meristems maintenance. This chain is Leucine-rich repeat receptor-like serine/threonine-protein kinase BAM2 (BAM2), found in Arabidopsis thaliana (Mouse-ear cress).